The following is a 542-amino-acid chain: MARYVFITGGVVSSLGKGIASAALGALLQARGYRVRLRKLDPYLNVDPGTMSPYQHGEVFVTDDGAETDLDLGHYERFTGRSANKRDNITTGRIYQNIIEKERRGDYLGATVQVIPHVTDEIKQFVLEGNEEFDFVLCEIGGTVGDIEAMPFLEAIRQLGNELPRGNAVYIHLTLMPWIPAAGELKTKPTQHSVKELRSIGIAPDILLVRADRPVPPEERRKLSLFCNVRESAVIQALDVAHIYDVPMAYHKEGLDSEVLAAFGIDPAPKPRMERWEEVSNRIHNPEGEVTIAIVGKYTGLKDAYKSLNEALTHGGIANRVRVKLDWIESEIFEKEDPAPWLEKVHGILVPGGFGERGSEGKILAAKFARERKVPYFGICFGMQMACIEAARSLAGIEKASSTEFGPTKEPVVGLMTEWLRGNMLEKRTAAGDLGGTMRLGAYEARLQPGSKIAEIYGSEEISERHRHRYEVNIGYREKLEACGLVFAGLSPDGVLPETIEYPDHPWFVGVQYHPELKSRPFEPHPLFASFIAAAVEQSRLV.

The interval 1-265 (MARYVFITGG…DSEVLAAFGI (265 aa)) is amidoligase domain. Residue Ser13 coordinates CTP. Residue Ser13 participates in UTP binding. An ATP-binding site is contributed by 14–19 (SLGKGI). L-glutamine is bound at residue Tyr54. Asp71 contributes to the ATP binding site. Positions 71 and 139 each coordinate Mg(2+). CTP contacts are provided by residues 146 to 148 (DIE), 186 to 191 (KTKPTQ), and Lys222. Residues 186–191 (KTKPTQ) and Lys222 each bind UTP. The Glutamine amidotransferase type-1 domain occupies 291-541 (TIAIVGKYTG…IAAAVEQSRL (251 aa)). Residue Gly353 participates in L-glutamine binding. Residue Cys380 is the Nucleophile; for glutamine hydrolysis of the active site. L-glutamine is bound by residues 381–384 (FGMQ), Glu404, and Arg469. Residues His514 and Glu516 contribute to the active site.

Belongs to the CTP synthase family. As to quaternary structure, homotetramer.

The catalysed reaction is UTP + L-glutamine + ATP + H2O = CTP + L-glutamate + ADP + phosphate + 2 H(+). It catalyses the reaction L-glutamine + H2O = L-glutamate + NH4(+). It carries out the reaction UTP + NH4(+) + ATP = CTP + ADP + phosphate + 2 H(+). It participates in pyrimidine metabolism; CTP biosynthesis via de novo pathway; CTP from UDP: step 2/2. Its activity is regulated as follows. Allosterically activated by GTP, when glutamine is the substrate; GTP has no effect on the reaction when ammonia is the substrate. The allosteric effector GTP functions by stabilizing the protein conformation that binds the tetrahedral intermediate(s) formed during glutamine hydrolysis. Inhibited by the product CTP, via allosteric rather than competitive inhibition. Its function is as follows. Catalyzes the ATP-dependent amination of UTP to CTP with either L-glutamine or ammonia as the source of nitrogen. Regulates intracellular CTP levels through interactions with the four ribonucleotide triphosphates. In Chelativorans sp. (strain BNC1), this protein is CTP synthase.